Consider the following 680-residue polypeptide: Harmonin-binding protein USHBP1 (680 aa).

Basic residues predominate over residues 1 to 15; sequence MSARATRPRSRRGRH. 3 disordered regions span residues 1 to 101, 135 to 162, and 217 to 250; these read MSAR…GPAE, PVEAEDRDPGAPGSFGNEEEASGPGQQE, and ASPPPSMLRAGRRNSNSSSSGAERRPWAPQDSPM. Positions 76–86 are enriched in basic and acidic residues; sequence PEERREPEVEA. Coiled-coil stretches lie at residues 177 to 219, 362 to 386, and 479 to 506; these read LGTR…EASP, ATNGDLQAAEKEASRLLVKKEVAMD, and LADLVLRLQLAQREKRGLELREAALRAQ. Residues 524–562 are disordered; the sequence is LMGDGSSGGSSEDPSSEEEAGEDRQQHYQGPPALLGGQM. The stretch at 573 to 661 forms a coiled coil; it reads QELSASLTRA…QQAEELAVLT (89 aa).

Belongs to the MCC family. As to quaternary structure, interacts via its C-terminus with the first PDZ domain of USH1C.

The polypeptide is Harmonin-binding protein USHBP1 (Rattus norvegicus (Rat)).